Here is a 378-residue protein sequence, read N- to C-terminus: tRNA-specific 2-thiouridylase MnmA (378 aa).

Residues 14-21 and Leu40 contribute to the ATP site; that span reads AMSGGVDS. Cys109 acts as the Nucleophile in catalysis. A disulfide bridge links Cys109 with Cys208. An ATP-binding site is contributed by Gly133. The tract at residues 156–158 is interaction with tRNA; sequence KDQ. Catalysis depends on Cys208, which acts as the Cysteine persulfide intermediate.

The protein belongs to the MnmA/TRMU family.

It localises to the cytoplasm. The enzyme catalyses S-sulfanyl-L-cysteinyl-[protein] + uridine(34) in tRNA + AH2 + ATP = 2-thiouridine(34) in tRNA + L-cysteinyl-[protein] + A + AMP + diphosphate + H(+). Catalyzes the 2-thiolation of uridine at the wobble position (U34) of tRNA, leading to the formation of s(2)U34. The polypeptide is tRNA-specific 2-thiouridylase MnmA (Streptomyces griseus subsp. griseus (strain JCM 4626 / CBS 651.72 / NBRC 13350 / KCC S-0626 / ISP 5235)).